A 501-amino-acid chain; its full sequence is Probable cytosol aminopeptidase (501 aa).

Mn(2+) contacts are provided by Lys-272 and Asp-277. The active site involves Lys-284. 3 residues coordinate Mn(2+): Asp-295, Asp-354, and Glu-356. Arg-358 is an active-site residue.

It belongs to the peptidase M17 family. Mn(2+) is required as a cofactor.

The protein resides in the cytoplasm. It carries out the reaction Release of an N-terminal amino acid, Xaa-|-Yaa-, in which Xaa is preferably Leu, but may be other amino acids including Pro although not Arg or Lys, and Yaa may be Pro. Amino acid amides and methyl esters are also readily hydrolyzed, but rates on arylamides are exceedingly low.. The enzyme catalyses Release of an N-terminal amino acid, preferentially leucine, but not glutamic or aspartic acids.. Its function is as follows. Presumably involved in the processing and regular turnover of intracellular proteins. Catalyzes the removal of unsubstituted N-terminal amino acids from various peptides. The protein is Probable cytosol aminopeptidase of Buchnera aphidicola subsp. Baizongia pistaciae (strain Bp).